The sequence spans 426 residues: Histidine--tRNA ligase (426 aa).

It belongs to the class-II aminoacyl-tRNA synthetase family. As to quaternary structure, homodimer.

It localises to the cytoplasm. The enzyme catalyses tRNA(His) + L-histidine + ATP = L-histidyl-tRNA(His) + AMP + diphosphate + H(+). The protein is Histidine--tRNA ligase of Prochlorococcus marinus (strain AS9601).